The following is a 326-amino-acid chain: Cyclin-dependent kinase 1 (326 aa).

Residues 16–306 form the Protein kinase domain; it reads FTKLEKIGEG…SKKALHHPYF (291 aa). ATP is bound by residues 22–30 and K45; that span reads IGEGTYGVV. D140 serves as the catalytic Proton acceptor.

Belongs to the protein kinase superfamily. CMGC Ser/Thr protein kinase family. CDC2/CDKX subfamily. Forms a stable but non-covalent complex with a regulatory subunit and with a cyclin. Interacts with cks-1.

The protein localises to the nucleus. It is found in the cytoplasm. Its subcellular location is the cytoskeleton. The protein resides in the microtubule organizing center. It localises to the centrosome. The catalysed reaction is L-seryl-[protein] + ATP = O-phospho-L-seryl-[protein] + ADP + H(+). It carries out the reaction L-threonyl-[protein] + ATP = O-phospho-L-threonyl-[protein] + ADP + H(+). The enzyme catalyses [DNA-directed RNA polymerase] + ATP = phospho-[DNA-directed RNA polymerase] + ADP + H(+). Its activity is regulated as follows. Phosphorylation both activates and inactivates the enzyme depending on the site of phosphorylation. In terms of biological role, plays a key role in the control of the eukaryotic cell cycle. Required for entry into S-phase and mitosis. Acts as a component of the kinase complex that phosphorylates the repetitive C-terminus of RNA polymerase II. May function in concert with npp-16 to arrest prophase blastomeres in response to anoxia. The sequence is that of Cyclin-dependent kinase 1 from Caenorhabditis briggsae.